The chain runs to 100 residues: NAD(P)H-quinone oxidoreductase subunit 4L, chloroplastic (100 aa).

Helical transmembrane passes span Met-1–Ile-21, Ala-29–Asn-49, and Ile-63–Ile-83.

Belongs to the complex I subunit 4L family. In terms of assembly, NDH is composed of at least 16 different subunits, 5 of which are encoded in the nucleus.

The protein resides in the plastid. It localises to the chloroplast thylakoid membrane. The enzyme catalyses a plastoquinone + NADH + (n+1) H(+)(in) = a plastoquinol + NAD(+) + n H(+)(out). It catalyses the reaction a plastoquinone + NADPH + (n+1) H(+)(in) = a plastoquinol + NADP(+) + n H(+)(out). Its function is as follows. NDH shuttles electrons from NAD(P)H:plastoquinone, via FMN and iron-sulfur (Fe-S) centers, to quinones in the photosynthetic chain and possibly in a chloroplast respiratory chain. The immediate electron acceptor for the enzyme in this species is believed to be plastoquinone. Couples the redox reaction to proton translocation, and thus conserves the redox energy in a proton gradient. The sequence is that of NAD(P)H-quinone oxidoreductase subunit 4L, chloroplastic from Angiopteris evecta (Mule's foot fern).